Consider the following 1179-residue polypeptide: MVPRRPASLEVTVACIWLLTVILGVCISFNVDVKNSMSFSGPVEDMFGYTVQQYENEEGKWVLIGSPLVGQPKARTGDVYKCPVGRERSMPCVKLDLPVNTSIPNVTEIKENMTFGSTLVTNPKGGFLACGPLYAYRCGHLHYTTGICSDVSPTFQVVNSFAPVQECSTQLDIVIVLDGSNSIYPWESVTAFLNDLLKRMDIGPKQTQVGIVQYGANVTHEFNLNKYSSTEEVLVAANKIGRRGGLQTMTALGIDTARKEAFTEARGARRGVKKVMVIVTDGESHDNYRLKQVIQDCEDENIQRFSIAILGHYNRGNLSTEKFVEEIKSIASEPTEKHFFNVSDELALVTIVKALGERIFALEATADQSAASFEMEMSQTGFSAHYSQDWVMLGAVGAYDWNGTVVMQKANQIVIPHNTTFQTEPTKMNEPLASYLGYTVNSATIPGDVLYIAGQPRYNHTGQVVIYKMEDGDVNILQTLSGEQIGSYFGSVLTTIDIDKDSYTDLLLVGAPMYMGTEKEEQGKVYVYAVNQTRFEYQMSLEPIKQTCCSSLKDNSCTKENKNEPCGARFGTAVAAVKDLNVDGFNDVVIGAPLEDDHAGAVYIYHGSGKTIRKEYAQRIPSGGDGKTLKFFGQSIHGEMDLNGDGLTDVTIGGLGGAALFWARDVAVVKVTMNFEPNKVNIQKKNCRVEGKETVCINATMCFHVKLKSKEDSVYEADLQYRVTLDSLRQISRSFFSGTQERRIQRNLTVRESECIRHSFYMLDKHDFQDSVRVTLDFNLTDPENGPVLDDALPNSVHGHIPFAKDCGNKERCVSDLTLDVSTTEKNLLIVRSQNDKFNVSLTVKNKGDSAYNTRTVVQYSPNLIFSGIEEIQKDSCESNQNITCRVGYPFLRTGDVVNFKIIFQFNTSHLSENAIIHLSATSDSEEPLESLYDNEVNISIPVKYEVGLQFYSSASEHHISVAANETVPELINSTKDIGDEINVFYTIRKRGHFPMPELRLAISFPNLTSDGYPVLYPTGWSSSDNVNCRPRSLEDPLGINSGKKMTISKSEVLKRGTIQDCSTCKIATITCHLLPSDVSQVNVSLILWKPTFIKAHFSSLNLTIRGELQSENSSLTLSSSNRKRELAIQISKDGLPGRVPLWVILLSAFAGLLLLMLLILALWKIGFFKRPLKKKMEK.

The N-terminal stretch at 1-28 is a signal peptide; it reads MVPRRPASLEVTVACIWLLTVILGVCIS. The Extracellular portion of the chain corresponds to 29 to 1141; it reads FNVDVKNSMS…SKDGLPGRVP (1113 aa). One copy of the FG-GAP 1 repeat lies at 30–91; that stretch reads NVDVKNSMSF…CPVGRERSMP (62 aa). Cys-82 and Cys-92 are disulfide-bonded. N-linked (GlcNAc...) asparagine glycosylation is found at Asn-100, Asn-105, Asn-112, Asn-217, Asn-317, Asn-341, Asn-402, Asn-418, and Asn-459. The stretch at 101-160 is one FG-GAP 2 repeat; sequence TSIPNVTEIKENMTFGSTLVTNPKGGFLACGPLYAYRCGHLHYTTGICSDVSPTFQVVNS. A VWFA domain is found at 175–364; sequence IVLDGSNSIY…LGERIFALEA (190 aa). The stretch at 365-417 is one FG-GAP 3 repeat; it reads TADQSAASFEMEMSQTGFSAHYSQDWVMLGAVGAYDWNGTVVMQKANQIVIPH. FG-GAP repeat units follow at residues 422-474, 475-537, 556-614, and 618-678; these read QTEP…DGDV, NILQ…RFEY, SCTK…TIRK, and QRIP…FEPN. Asp-497, Asp-499, Asp-501, and Asp-505 together coordinate Ca(2+). N-linked (GlcNAc...) asparagine glycosylation is present at Asn-531. Residues Asp-579, Asn-581, Asp-583, Asp-587, Asp-641, Asn-643, Asp-645, and Asp-649 each contribute to the Ca(2+) site. Cysteines 687 and 696 form a disulfide. Residues Asn-698, Asn-747, and Asn-779 are each glycosylated (N-linked (GlcNAc...) asparagine). A disulfide bridge connects residues Cys-702 and Cys-755. A disulfide bridge links Cys-807 with Cys-813. N-linked (GlcNAc...) asparagine glycans are attached at residues Asn-839, Asn-882, Asn-907, Asn-938, Asn-965, Asn-973, and Asn-1007. The cysteines at positions 877 and 885 are disulfide-linked. Disulfide bonds link Cys-1029/Cys-1062 and Cys-1065/Cys-1072. N-linked (GlcNAc...) asparagine glycosylation is found at Asn-1083, Asn-1102, and Asn-1113. Residues 1142–1164 form a helical membrane-spanning segment; it reads LWVILLSAFAGLLLLMLLILALW. Residues 1165-1179 lie on the Cytoplasmic side of the membrane; it reads KIGFFKRPLKKKMEK. The short motif at 1167-1171 is the GFFKR motif element; that stretch reads GFFKR.

This sequence belongs to the integrin alpha chain family. As to quaternary structure, heterodimer of an alpha and a beta subunit. Alpha-1 associates with beta-1. Interacts with RAB21. Interacts (via cytoplasmic domain) with PTPN2; activates PTPN2 phosphatase activity towards EGFR and negatively regulates EGF signaling.

It localises to the membrane. Integrin alpha-1/beta-1 is a receptor for laminin and collagen. It recognizes the proline-hydroxylated sequence G-F-P-G-E-R in collagen. Involved in anchorage-dependent, negative regulation of EGF-stimulated cell growth. The chain is Integrin alpha-1 (Itga1) from Mus musculus (Mouse).